A 424-amino-acid chain; its full sequence is Histidine--tRNA ligase (424 aa).

This sequence belongs to the class-II aminoacyl-tRNA synthetase family. In terms of assembly, homodimer.

The protein localises to the cytoplasm. The enzyme catalyses tRNA(His) + L-histidine + ATP = L-histidyl-tRNA(His) + AMP + diphosphate + H(+). The polypeptide is Histidine--tRNA ligase (Pediococcus pentosaceus (strain ATCC 25745 / CCUG 21536 / LMG 10740 / 183-1w)).